The chain runs to 138 residues: Small ribosomal subunit protein uS11c (138 aa).

Residues methionine 1 to alanine 22 are disordered. Residues serine 9–alanine 22 are compositionally biased toward basic residues.

This sequence belongs to the universal ribosomal protein uS11 family. In terms of assembly, part of the 30S ribosomal subunit.

Its subcellular location is the plastid. The protein resides in the chloroplast. The sequence is that of Small ribosomal subunit protein uS11c from Nicotiana tabacum (Common tobacco).